A 431-amino-acid polypeptide reads, in one-letter code: Serine hydroxymethyltransferase 2 (431 aa).

(6S)-5,6,7,8-tetrahydrofolate-binding positions include Leu131 and 135–137; that span reads GHL. At Lys240 the chain carries N6-(pyridoxal phosphate)lysine.

It belongs to the SHMT family. In terms of assembly, homodimer. The cofactor is pyridoxal 5'-phosphate.

It localises to the cytoplasm. The catalysed reaction is (6R)-5,10-methylene-5,6,7,8-tetrahydrofolate + glycine + H2O = (6S)-5,6,7,8-tetrahydrofolate + L-serine. The protein operates within one-carbon metabolism; tetrahydrofolate interconversion. It functions in the pathway amino-acid biosynthesis; glycine biosynthesis; glycine from L-serine: step 1/1. Its function is as follows. Catalyzes the reversible interconversion of serine and glycine with tetrahydrofolate (THF) serving as the one-carbon carrier. This reaction serves as the major source of one-carbon groups required for the biosynthesis of purines, thymidylate, methionine, and other important biomolecules. Also exhibits THF-independent aldolase activity toward beta-hydroxyamino acids, producing glycine and aldehydes, via a retro-aldol mechanism. The protein is Serine hydroxymethyltransferase 2 of Vibrio parahaemolyticus serotype O3:K6 (strain RIMD 2210633).